The following is a 503-amino-acid chain: MAKALPIMFQGTHSDAGKSIIATAFCRIFAKNGWKTAPFKSQNMSLNSYVTVDGKEIGRAQGIQAEAAGVVATTDMNPILIKPSREHESQIVVHGKPYKNMQAFAYRGEFFEKGLAIIHESLDVLMNEYDRLVIEGAGSPAEINLNDRELVNMRVARMANAPVVLIGDIERGGVFASLVGTLQLLDKEDRKRIIGVIINKFRGDLALLKPGLDWFEQYTGVPVLGVVPYLEDLHIDAEDSVSLEQMSTAVNPDKDIDIAVIRYPKISNFTDVDPFLTEPDCHVRFVATAAQLGQPDLLILPGSKNTIEDLLYMKKNGIAEQIAQLNKHHRVTIVGICGGYQMLGARIRDPFGVETPLREISGLNLLPIETTLERKKTTVLSEGILTFTGERFFVKGYEIHMGRSQPLDGNIPFIHVQGRAEGAKSKDERVIGTYFHDLFHNDAFREALLNKIRREKGLAPIYGRQSFRTIREQAFDRLADHVKRHVCIEEIEEKMYMFQRRDV.

Residues 255 to 444 form the GATase cobBQ-type domain; the sequence is DIDIAVIRYP…FHDLFHNDAF (190 aa). C337 acts as the Nucleophile in catalysis. H436 is an active-site residue.

This sequence belongs to the CobB/CobQ family. CobQ subfamily.

It functions in the pathway cofactor biosynthesis; adenosylcobalamin biosynthesis. Catalyzes amidations at positions B, D, E, and G on adenosylcobyrinic A,C-diamide. NH(2) groups are provided by glutamine, and one molecule of ATP is hydrogenolyzed for each amidation. The chain is Cobyric acid synthase from Geobacillus sp. (strain WCH70).